The primary structure comprises 300 residues: MATVPFPILCLPDFVLQKSLKLMGVVEHLCLSILSKNIKQLIATLKGYPKCFSFKFVPFTSLTVVGERFKHFSFRFDIDESSQNANLRSYTDEGTYITLTVPGFTVKHWIEHVAYVLCRNNSIKLVLWEPNIDEVYEIVKDMRTVEVVIVSSEIQSCHLLKLFPSLRYLGVYKAPISAQILTYNLLHLEVKTKVTLNDILISNCSNFSISGNDVSDKELNFFMRSWIKGSNPRLTKFYIRNSLRVRDPYLETVLFQNIDYIETHKKIYWRTFEISRPDGTKADVMWDPLYNSYFNMTVQH.

Residues 5 to 51 (PFPILCLPDFVLQKSLKLMGVVEHLCLSILSKNIKQLIATLKGYPKC) form the F-box domain.

Expressed in D-type motor neuron cell bodies.

Functionally, substrate recognition component of E3 ubiquitin-protein ligase complex which mediates the ubiquitination and subsequent proteasomal degradation of target proteins such as mdl-1. Positively regulates axon regeneration by targeting mdl-1 for ubiquitin-mediated degradation; probably thereby reducing levels of mdl-1-mxl-1 heterodimers, allowing free mxl-1 to form complexes with tdpt-1 and thus inhibiting tdpt-1-dependent sumoylation of ets-4. The protein is F-box associated domain-containing protein sdz-33 of Caenorhabditis elegans.